Consider the following 600-residue polypeptide: MRLSQMLFVTLREDPAEAEIPSHKLLLRAGYIRRIASGIYAYLPLMWRVLRKVSQIVREEMDATGAQETLLPQLQPAELWQESGRWETYAKAEGIMFSLDDRQQRQLGLGPTHEEVITAVARDLIRSYRQLPQNLYQIQTKFRDEIRPRFGLMRGREFIMKDAYSFHADEESLRQTYAAMDQAYRNIFRRCGLQFRAVEADSGAIGGSASQEFMILADAGEDEILYTEDGRYAANVEKAVSLPAEAIASAFTTFEKRETPGTDTIASLCEFLKADPTQVVKQVLYQAVFDNGKLLPILISIRGDQSVNEIKLTNELTRRAADYGAKTVIALTVPDAEALKKWTAAPLPLGYLGPDLADSAIAVNESIIPKFLRLVDPTAAELQNFVTGANEVNFHVVGANWETNFPKPAVVDLRTALVGDRAQHDSSQVLASARGIEAGHIFQLGLKYSQAMGATFTTENGTEEPLWMGCYGIGVSRVAQAAVEQSYDKDGIIWPVAIAPYQAVVVIPNITDTEQVAAAEKIYADLTAAGIETLLDDRDERAGVKFKDADLIGIPYRIVTGRSLKEGKVEVVQRASKESSVIAVGSVVETVQDWIAAAIV.

The protein belongs to the class-II aminoacyl-tRNA synthetase family. ProS type 1 subfamily. As to quaternary structure, homodimer.

The protein resides in the cytoplasm. It carries out the reaction tRNA(Pro) + L-proline + ATP = L-prolyl-tRNA(Pro) + AMP + diphosphate. Catalyzes the attachment of proline to tRNA(Pro) in a two-step reaction: proline is first activated by ATP to form Pro-AMP and then transferred to the acceptor end of tRNA(Pro). As ProRS can inadvertently accommodate and process non-cognate amino acids such as alanine and cysteine, to avoid such errors it has two additional distinct editing activities against alanine. One activity is designated as 'pretransfer' editing and involves the tRNA(Pro)-independent hydrolysis of activated Ala-AMP. The other activity is designated 'posttransfer' editing and involves deacylation of mischarged Ala-tRNA(Pro). The misacylated Cys-tRNA(Pro) is not edited by ProRS. The polypeptide is Proline--tRNA ligase (Synechococcus sp. (strain ATCC 27144 / PCC 6301 / SAUG 1402/1) (Anacystis nidulans)).